A 348-amino-acid chain; its full sequence is Ion-translocating oxidoreductase complex subunit D (348 aa).

Helical transmembrane passes span 15–35 (LTAK…GMQA), 36–56 (YFFG…AVAI), 67–87 (LTAF…LAMS), 88–108 (IPPY…LLLA), and 125–145 (VAYA…LVPI). The residue at position 186 (Thr-186) is an FMN phosphoryl threonine. The next 5 helical transmembrane spans lie at 212–232 (LFAN…LLLI), 241–261 (IPAA…LLLP), 265–285 (LNVV…FIAT), 298–318 (LIFG…GNYP), and 320–340 (AVAF…HYTQ).

It belongs to the NqrB/RnfD family. In terms of assembly, the complex is composed of six subunits: RnfA, RnfB, RnfC, RnfD, RnfE and RnfG. Requires FMN as cofactor.

Its subcellular location is the cell inner membrane. Its function is as follows. Part of a membrane-bound complex that couples electron transfer with translocation of ions across the membrane. The polypeptide is Ion-translocating oxidoreductase complex subunit D (Actinobacillus pleuropneumoniae serotype 7 (strain AP76)).